A 217-amino-acid chain; its full sequence is Small ribosomal subunit protein uS3 (217 aa).

A KH type-2 domain is found at 24-93 (IKEFLEYKLS…NPQIDVIDVS (70 aa)).

The protein belongs to the universal ribosomal protein uS3 family. As to quaternary structure, part of the 30S ribosomal subunit.

In terms of biological role, binds the lower part of the 30S subunit head. The protein is Small ribosomal subunit protein uS3 of Pyrobaculum islandicum (strain DSM 4184 / JCM 9189 / GEO3).